Here is a 214-residue protein sequence, read N- to C-terminus: Large ribosomal subunit protein uL4 (214 aa).

A disordered region spans residues 43–83 (RRQAGTHKAKSRSEVNRTTKKSIKQKGSGGARHGSRNAPIF).

It belongs to the universal ribosomal protein uL4 family. As to quaternary structure, part of the 50S ribosomal subunit.

Its function is as follows. One of the primary rRNA binding proteins, this protein initially binds near the 5'-end of the 23S rRNA. It is important during the early stages of 50S assembly. It makes multiple contacts with different domains of the 23S rRNA in the assembled 50S subunit and ribosome. Forms part of the polypeptide exit tunnel. This Hyphomonas neptunium (strain ATCC 15444) protein is Large ribosomal subunit protein uL4.